Here is a 124-residue protein sequence, read N- to C-terminus: Apolipoprotein C-IV (124 aa).

A signal peptide spans 1–27; sequence MLLPRRGLRTLPSLCLYILVLVWVVAC.

Belongs to the apolipoprotein C4 family. Glycosylated; contains sialic acid. Present in up to five sialylated isoforms. As to expression, blood plasma, associated primarily with VLDL and HDL. Expressed mainly in the liver.

The protein localises to the secreted. Functionally, may participate in lipoprotein metabolism. The polypeptide is Apolipoprotein C-IV (APOC4) (Oryctolagus cuniculus (Rabbit)).